Consider the following 117-residue polypeptide: UPF0122 protein Cthe_0771 (117 aa).

Belongs to the UPF0122 family.

Functionally, might take part in the signal recognition particle (SRP) pathway. This is inferred from the conservation of its genetic proximity to ftsY/ffh. May be a regulatory protein. The protein is UPF0122 protein Cthe_0771 of Acetivibrio thermocellus (strain ATCC 27405 / DSM 1237 / JCM 9322 / NBRC 103400 / NCIMB 10682 / NRRL B-4536 / VPI 7372) (Clostridium thermocellum).